Here is a 797-residue protein sequence, read N- to C-terminus: Speckle targeted PIP5K1A-regulated poly(A) polymerase (797 aa).

Residues 14–44 (FHCNLCHVNIPNRPSLEDHVKGKKHLHLLRL) form a Matrin-type zinc finger. Residues 54 to 126 (NSVFVSGFKA…LKLRVKPREK (73 aa)) enclose the RRM domain. Serine 205 provides a ligand contact to ATP. Positions 216 and 218 each coordinate Mg(2+). Residues aspartate 216, aspartate 218, asparagine 319, arginine 341, tyrosine 363, and histidine 495 each coordinate UTP. Asparagine 319 contributes to the ATP binding site. The PAP-associated domain maps to 421 to 495 (DLCTLLFGFF…NVLDPFELNH (75 aa)). The interval 544–787 (QSEAAASSQP…FLPKMAETIM (244 aa)) is KA1; binds the bulging loops of U6 snRNA but is dispensable for terminal uridylyltransferase activity. Residues 611–659 (EETQSLDKTDKSGSEMEVNNNRSLEDTNIQVKGEAGKKRPLSVEEGPST) form a disordered region. Positions 615–624 (SLDKTDKSGS) are enriched in basic and acidic residues. A compositionally biased stretch (polar residues) spans 627–640 (EVNNNRSLEDTNIQ).

This sequence belongs to the DNA polymerase type-B-like family. Associates with the cleavage and polyadenylation specificity factor (CPSF) complex. Requires Mg(2+) as cofactor. The cofactor is Mn(2+).

It is found in the nucleus. The protein resides in the nucleolus. It localises to the nucleus speckle. The catalysed reaction is RNA(n) + UTP = RNA(n)-3'-uridine ribonucleotide + diphosphate. It carries out the reaction RNA(n) + ATP = RNA(n)-3'-adenine ribonucleotide + diphosphate. Its function is as follows. Poly(A) polymerase that creates the 3'-poly(A) tail of specific pre-mRNAs. In addition to polyadenylation, it is also required for the 3'-end cleavage of pre-mRNAs: binds to the 3'UTR of targeted pre-mRNAs and promotes the recruitment and assembly of the CPSF complex on the 3'UTR of pre-mRNAs. In addition to adenylyltransferase activity, also has uridylyltransferase activity. However, the ATP ratio is higher than UTP in cells, suggesting that it functions primarily as a poly(A) polymerase. This is Speckle targeted PIP5K1A-regulated poly(A) polymerase (tut1) from Danio rerio (Zebrafish).